The following is a 472-amino-acid chain: MTEFGIRNMDQVAPVYNGHRAMLKRQLAFDNVSVPTSLYSGLFSAYEEEQAVPTGLDSYSHDSSSCELPLLTPCSKAVMSQALKNTFNGFAKKRFRLGILSNPWLWDENNVFQWLWWAAKEFSLQNVNFQKFLMNGHELCSLGKERFLALAPDFVGDILWEHLEEMMKEHQEKAQEPYIDHSNQDSINHWMNADSLNFTTDPLQCGAQVHNYPKNGMFNDMCSVPTGQTLLQPKQEFQQYPSSCLKSRAVNYSPASQDFARSNMNALLNSLNSGKLRDYDSGDSGTESFESTESLLQSWTSQSSLVDMQRVPSYDGFEEDGSQALCLNKPPMSFKDYIQDRCEPAELGKPVIPASILAGFTGSGPIQLWQFLLELLTDKSCQSFISWTGDGWEFKLTDPDEVARRWGKRKNKPKMNYEKLSRGLRYYYDKNIIHKTSGKRYVYRFVCDLHNLLGYTPDELHAMLGVQPDTDE.

The PNT domain maps to 85-170 (NTFNGFAKKR…EHLEEMMKEH (86 aa)). Residues 366-446 (IQLWQFLLEL…SGKRYVYRFV (81 aa)) constitute a DNA-binding region (ETS).

This sequence belongs to the ETS family.

It is found in the nucleus. Probable transcription factor. This chain is Protein c-ets-2-A (ets2-a), found in Xenopus laevis (African clawed frog).